The chain runs to 685 residues: Polyphosphate kinase (685 aa).

ATP is bound at residue Asn-45. 2 residues coordinate Mg(2+): Arg-372 and Arg-402. Positions 427–461 (PGLKIHAKLFLISRKEGDDVVRYAHIGTGNFNEKT) constitute a PLD phosphodiesterase 1 domain. Catalysis depends on His-432, which acts as the Phosphohistidine intermediate. Residues Tyr-465, Arg-561, and His-589 each coordinate ATP. One can recognise a PLD phosphodiesterase 2 domain in the interval 584–614 (DRYLEHDRIYIFDNAGDKQVYLSSADWMTRN).

It belongs to the polyphosphate kinase 1 (PPK1) family. The cofactor is Mg(2+). Post-translationally, an intermediate of this reaction is the autophosphorylated ppk in which a phosphate is covalently linked to a histidine residue through a N-P bond.

The catalysed reaction is [phosphate](n) + ATP = [phosphate](n+1) + ADP. Its function is as follows. Catalyzes the reversible transfer of the terminal phosphate of ATP to form a long-chain polyphosphate (polyP). This chain is Polyphosphate kinase, found in Klebsiella pneumoniae.